The following is a 206-amino-acid chain: Uridine kinase (206 aa).

9 to 16 (GGSGSGKT) serves as a coordination point for ATP.

Belongs to the uridine kinase family.

It is found in the cytoplasm. The catalysed reaction is uridine + ATP = UMP + ADP + H(+). The enzyme catalyses cytidine + ATP = CMP + ADP + H(+). The protein operates within pyrimidine metabolism; CTP biosynthesis via salvage pathway; CTP from cytidine: step 1/3. It participates in pyrimidine metabolism; UMP biosynthesis via salvage pathway; UMP from uridine: step 1/1. This is Uridine kinase from Borrelia duttonii (strain Ly).